Consider the following 369-residue polypeptide: Protein-glutamate methylesterase/protein-glutamine glutaminase 1 (369 aa).

The region spanning 11-128 is the Response regulatory domain; sequence RVLIVDDSAA…DLERQEASIR (118 aa). 4-aspartylphosphate is present on D62. The segment at 136-168 is disordered; the sequence is ATETTRRRSQPEPRPLAPGPKLTADEILPARPP. In terms of domain architecture, CheB-type methylesterase spans 170 to 358; sequence PVPETMPVVC…LDRLAARIME (189 aa). Residues S183, H209, and D305 contribute to the active site.

Belongs to the CheB family. Post-translationally, phosphorylated by CheA. Phosphorylation of the N-terminal regulatory domain activates the methylesterase activity.

Its subcellular location is the cytoplasm. The enzyme catalyses [protein]-L-glutamate 5-O-methyl ester + H2O = L-glutamyl-[protein] + methanol + H(+). It catalyses the reaction L-glutaminyl-[protein] + H2O = L-glutamyl-[protein] + NH4(+). Its function is as follows. Involved in chemotaxis. Part of a chemotaxis signal transduction system that modulates chemotaxis in response to various stimuli. Catalyzes the demethylation of specific methylglutamate residues introduced into the chemoreceptors (methyl-accepting chemotaxis proteins or MCP) by CheR. Also mediates the irreversible deamidation of specific glutamine residues to glutamic acid. The polypeptide is Protein-glutamate methylesterase/protein-glutamine glutaminase 1 (Cereibacter sphaeroides (strain ATCC 17023 / DSM 158 / JCM 6121 / CCUG 31486 / LMG 2827 / NBRC 12203 / NCIMB 8253 / ATH 2.4.1.) (Rhodobacter sphaeroides)).